We begin with the raw amino-acid sequence, 350 residues long: Heat-inducible transcription repressor HrcA (350 aa).

The protein belongs to the HrcA family.

In terms of biological role, negative regulator of class I heat shock genes (grpE-dnaK-dnaJ and groELS operons). Prevents heat-shock induction of these operons. The sequence is that of Heat-inducible transcription repressor HrcA from Xanthomonas axonopodis pv. citri (strain 306).